The following is a 491-amino-acid chain: Probable cytosol aminopeptidase (491 aa).

Mn(2+)-binding residues include lysine 261 and aspartate 266. Lysine 273 is a catalytic residue. Mn(2+) contacts are provided by aspartate 284, aspartate 343, and glutamate 345. Arginine 347 is a catalytic residue.

This sequence belongs to the peptidase M17 family. The cofactor is Mn(2+).

The protein localises to the cytoplasm. It catalyses the reaction Release of an N-terminal amino acid, Xaa-|-Yaa-, in which Xaa is preferably Leu, but may be other amino acids including Pro although not Arg or Lys, and Yaa may be Pro. Amino acid amides and methyl esters are also readily hydrolyzed, but rates on arylamides are exceedingly low.. It carries out the reaction Release of an N-terminal amino acid, preferentially leucine, but not glutamic or aspartic acids.. Its function is as follows. Presumably involved in the processing and regular turnover of intracellular proteins. Catalyzes the removal of unsubstituted N-terminal amino acids from various peptides. This is Probable cytosol aminopeptidase from Stenotrophomonas maltophilia (strain K279a).